Consider the following 425-residue polypeptide: Xylose isomerase (425 aa).

Active-site residues include histidine 101 and aspartate 104. Glutamate 232, glutamate 268, histidine 271, aspartate 296, aspartate 307, aspartate 309, and aspartate 339 together coordinate Mg(2+).

Belongs to the xylose isomerase family. In terms of assembly, homotetramer. It depends on Mg(2+) as a cofactor.

It localises to the cytoplasm. The catalysed reaction is alpha-D-xylose = alpha-D-xylulofuranose. This is Xylose isomerase from Salmonella paratyphi A (strain ATCC 9150 / SARB42).